Consider the following 147-residue polypeptide: Cytochrome c-type biogenesis protein CcmE (147 aa).

Residues 1 to 9 lie on the Cytoplasmic side of the membrane; that stretch reads MKNLKKQRR. A helical; Signal-anchor for type II membrane protein transmembrane segment spans residues 10–30; the sequence is IQVIALATVALVLSTALIGYA. The Periplasmic segment spans residues 31–147; the sequence is MRDGINFFRA…EQGVYKGTEG (117 aa). The heme site is built by H123 and Y127.

It belongs to the CcmE/CycJ family.

The protein resides in the cell inner membrane. Functionally, heme chaperone required for the biogenesis of c-type cytochromes. Transiently binds heme delivered by CcmC and transfers the heme to apo-cytochromes in a process facilitated by CcmF and CcmH. This is Cytochrome c-type biogenesis protein CcmE from Roseobacter denitrificans (strain ATCC 33942 / OCh 114) (Erythrobacter sp. (strain OCh 114)).